Consider the following 549-residue polypeptide: Cation/acetate symporter ActP (549 aa).

A run of 13 helical transmembrane segments spans residues 33–53 (WQAI…TYWA), 77–97 (LAIA…ALVF), 103–123 (GLIY…LIAE), 148–168 (ILSA…QMVG), 183–203 (IAVV…GMLA), 206–226 (WVQI…AFMV), 262–282 (ISAL…PHIL), 303–323 (GFMG…IMLV), 355–375 (LFLG…VAGL), 404–424 (VSKI…VLFE), 428–448 (IAFM…PIIL), 464–484 (GGWL…TIWV), and 493–513 (IFPY…GIWF).

Belongs to the sodium:solute symporter (SSF) (TC 2.A.21) family.

The protein localises to the cell inner membrane. Transports acetate. This is Cation/acetate symporter ActP from Escherichia coli (strain ATCC 8739 / DSM 1576 / NBRC 3972 / NCIMB 8545 / WDCM 00012 / Crooks).